The chain runs to 117 residues: Hydrogenase maturation factor HypA (117 aa).

His2 is a binding site for Ni(2+). Residues Cys73, Cys76, Cys89, and Cys92 each coordinate Zn(2+).

It belongs to the HypA/HybF family.

In terms of biological role, involved in the maturation of [NiFe] hydrogenases. Required for nickel insertion into the metal center of the hydrogenase. This Shewanella baltica (strain OS223) protein is Hydrogenase maturation factor HypA.